A 268-amino-acid chain; its full sequence is Eukaryotic translation initiation factor 3 subunit J (268 aa).

Disordered stretches follow at residues 1–117 (MTPS…DLKH) and 219–242 (NEKM…KTKV). A compositionally biased stretch (acidic residues) spans 26–44 (DEEDEEVLDSWDAAEDSEV). The stretch at 40–95 (EDSEVEREKAAKAAEAKAKAEAEAAAKKKSKAQRIEEHKAERRKNAEADSEEDEDE) forms a coiled coil. 2 stretches are compositionally biased toward basic and acidic residues: residues 45–65 (EREK…EAAA) and 72–86 (QRIE…KNAE). The span at 87–99 (ADSEEDEDEDEDE) shows a compositional bias: acidic residues. Composition is skewed to basic and acidic residues over residues 100 to 117 (AEKR…DLKH) and 220 to 232 (EKMR…DKGS).

This sequence belongs to the eIF-3 subunit J family. As to quaternary structure, component of the eukaryotic translation initiation factor 3 (eIF-3) complex.

Its subcellular location is the cytoplasm. Component of the eukaryotic translation initiation factor 3 (eIF-3) complex, which is involved in protein synthesis of a specialized repertoire of mRNAs and, together with other initiation factors, stimulates binding of mRNA and methionyl-tRNAi to the 40S ribosome. The eIF-3 complex specifically targets and initiates translation of a subset of mRNAs involved in cell proliferation. This Aspergillus clavatus (strain ATCC 1007 / CBS 513.65 / DSM 816 / NCTC 3887 / NRRL 1 / QM 1276 / 107) protein is Eukaryotic translation initiation factor 3 subunit J (hcr1).